We begin with the raw amino-acid sequence, 475 residues long: Methylenomycin A resistance protein (475 aa).

14 consecutive transmembrane segments (helical) span residues 28–48 (ITALATGFVMATLDVTVVNVA), 65–85 (WIVDGYVLTFASLLMLAGGLA), 93–113 (VYLWGMGVFFLASLACALAPT), 123–143 (VQGAGAALFMPSSLSLLVFSF), 152–172 (MLGLWSAIVATSSGLGPTVGG), 173–193 (LMVSAFGWESIFLLNLPIGAI), 212–232 (LAVPGHLLWIVALAAVSFALI), 240–260 (TAGPVLTAYAVAVTAAALLAL), 285–305 (LVGFLFNFALFGSTFMLGLYF), 314–334 (FQAGLELLPMTIFFPVANIVY), 346–366 (LLTAFLLLAGAASLSMVTITA), 371–391 (WVVAVAVGVANIGAGIISPGM), 416–436 (QIGSLVGIAAMGVVLHSTSDW), and 439–459 (GAAISFLAVGLAYLLGGLSAW).

It belongs to the major facilitator superfamily.

It is found in the cell membrane. Its function is as follows. Resistance to the epoxide antibiotic methylenomycin A; probably by mediating its efflux. This is Methylenomycin A resistance protein (mmr) from Streptomyces coelicolor (strain ATCC BAA-471 / A3(2) / M145).